The following is an 802-amino-acid chain: Copal-8-ol diphosphate hydratase, chloroplastic (802 aa).

Residues 1 to 24 (MQVIITSSHRFFCHHLHQLKSPTS) constitute a chloroplast transit peptide. Position 249 (Lys249) interacts with substrate. The Mg(2+) site is built by Asp382 and Asp384. A DXDD motif motif is present at residues 382–385 (DVDD). Lys468 is a binding site for substrate.

It belongs to the terpene synthase family. Mg(2+) is required as a cofactor. As to expression, expressed specifically in the secretory cells of the glandular trichomes.

It is found in the plastid. Its subcellular location is the chloroplast. The catalysed reaction is (2E,6E,10E)-geranylgeranyl diphosphate + H2O = 8-hydroxycopalyl diphosphate. It functions in the pathway secondary metabolite biosynthesis; terpenoid biosynthesis. Its function is as follows. Class-II terpene synthase that synthesizes 8-hydroxy-copalyl diphosphate. Involved in the biosynthesis of cis-abienol, a labdane diterpene that can be used as synthesis precursor of ambergris substitution fragance products. The protein is Copal-8-ol diphosphate hydratase, chloroplastic of Nicotiana tabacum (Common tobacco).